A 204-amino-acid polypeptide reads, in one-letter code: Large ribosomal subunit protein uL4 (204 aa).

The interval 49–76 is disordered; the sequence is KTKGISDVSGTTAKPYGQKRTGRARQGS.

It belongs to the universal ribosomal protein uL4 family. Part of the 50S ribosomal subunit.

Functionally, one of the primary rRNA binding proteins, this protein initially binds near the 5'-end of the 23S rRNA. It is important during the early stages of 50S assembly. It makes multiple contacts with different domains of the 23S rRNA in the assembled 50S subunit and ribosome. Its function is as follows. Forms part of the polypeptide exit tunnel. The chain is Large ribosomal subunit protein uL4 from Wolbachia sp. subsp. Drosophila simulans (strain wRi).